The primary structure comprises 400 residues: Lysophospholipid transporter LplT (400 aa).

Transmembrane regions (helical) follow at residues 19–39 (VIVA…ATLA), 53–73 (VLQM…GQIA), 91–111 (AGAA…LVGI), 139–159 (LMEA…GVLA), 164–184 (IAAL…NLFI), 195–213 (SWRL…VVLW), 227–247 (LFWG…PVAL), 257–277 (YLNA…AKLV), 281–301 (TVSR…IFSL), 304–324 (ALLP…FFVV), 352–372 (NSAM…GVPA), and 373–393 (VAIG…LWIW).

Belongs to the major facilitator superfamily. LplT (TC 2.A.1.42) family.

It localises to the cell inner membrane. Its function is as follows. Catalyzes the facilitated diffusion of 2-acyl-glycero-3-phosphoethanolamine (2-acyl-GPE) into the cell. This Salmonella schwarzengrund (strain CVM19633) protein is Lysophospholipid transporter LplT.